The chain runs to 450 residues: UDP-N-acetylmuramoylalanine--D-glutamate ligase (450 aa).

119–125 (GTNGKTT) provides a ligand contact to ATP.

The protein belongs to the MurCDEF family.

The protein localises to the cytoplasm. The enzyme catalyses UDP-N-acetyl-alpha-D-muramoyl-L-alanine + D-glutamate + ATP = UDP-N-acetyl-alpha-D-muramoyl-L-alanyl-D-glutamate + ADP + phosphate + H(+). The protein operates within cell wall biogenesis; peptidoglycan biosynthesis. Cell wall formation. Catalyzes the addition of glutamate to the nucleotide precursor UDP-N-acetylmuramoyl-L-alanine (UMA). This Lactococcus lactis subsp. lactis (strain IL1403) (Streptococcus lactis) protein is UDP-N-acetylmuramoylalanine--D-glutamate ligase.